A 97-amino-acid chain; its full sequence is Exodeoxyribonuclease 7 small subunit (97 aa).

The tract at residues 1-22 is disordered; that stretch reads MAKTASPGATPPGNGTEPLPDN.

It belongs to the XseB family. In terms of assembly, heterooligomer composed of large and small subunits.

Its subcellular location is the cytoplasm. The catalysed reaction is Exonucleolytic cleavage in either 5'- to 3'- or 3'- to 5'-direction to yield nucleoside 5'-phosphates.. Bidirectionally degrades single-stranded DNA into large acid-insoluble oligonucleotides, which are then degraded further into small acid-soluble oligonucleotides. The chain is Exodeoxyribonuclease 7 small subunit from Burkholderia lata (strain ATCC 17760 / DSM 23089 / LMG 22485 / NCIMB 9086 / R18194 / 383).